A 347-amino-acid polypeptide reads, in one-letter code: LRP2-binding protein (347 aa).

A TPR repeat occupies 59–92 (TLAYFLRGQLYFEEGWYEEALEQFEEIKEKDHQA). Sel1-like repeat units lie at residues 93-125 (TYQLGVMYYDGLGTTLDAEKGVDYMKKILDSPC), 133-168 (FAAAYNLGRAYYEGKGVKRSNEEAERLWLIAADNGN), 173-206 (VKAQSMLGLYYSTKEPKELEKAFYWHSEACGNGN), 207-242 (LESQGALGLMYLYGQGIRQDTEAALQCLREAAERGN), 243-277 (VYAQGNLVEYYYKMKFFTKCVAFSKRIADYDEVHD), and 297-332 (AMASFYHARCLQLGLGITRDETTAKHYYSKACRLNP).

As to quaternary structure, interacts with LRP2.

Its subcellular location is the cytoplasm. May act as an adapter that regulates LRP2 function. This chain is LRP2-binding protein (LRP2BP), found in Homo sapiens (Human).